The primary structure comprises 132 residues: MQIKGHRICGGRATGPALVSKDAISFLGGVDPGTGTVIEKGHALYGKNVKGTVLIFPGGKGSTVGSYVIYQLMKNGVAPAAMINIKAEPIVAVGAIISGIPMVDRLEQNPVETIKDGDTVTVDGTAGIIELS.

The Proton acceptor role is filled by S62.

Belongs to the AcnX type II small subunit family. In terms of assembly, heterodimer composed of a large subunit (PMDh-L) and a small subunit (PMDh-S).

It carries out the reaction (R)-5-phosphomevalonate = (2E)-3-methyl-5-phosphooxypent-2-enoate + H2O. It participates in isoprenoid biosynthesis; isopentenyl diphosphate biosynthesis via mevalonate pathway. In terms of biological role, component of a hydro-lyase that catalyzes the dehydration of mevalonate 5-phosphate (MVA5P) to form trans-anhydromevalonate 5-phosphate (tAHMP). Involved in the archaeal mevalonate (MVA) pathway, which provides fundamental precursors for isoprenoid biosynthesis, such as isopentenyl diphosphate (IPP) and dimethylallyl diphosphate (DMAPP). This is Phosphomevalonate dehydratase small subunit from Methanocella arvoryzae (strain DSM 22066 / NBRC 105507 / MRE50).